The primary structure comprises 331 residues: Thiamine-monophosphate kinase (331 aa).

4 residues coordinate Mg(2+): D43, T59, T60, and D61. Residue H68 coordinates substrate. Positions 90, 138, and 231 each coordinate Mg(2+). 137–138 lines the ATP pocket; it reads GD. Residue S233 coordinates ATP. D234 is a Mg(2+) binding site. Positions 284 and 328 each coordinate substrate.

The protein belongs to the thiamine-monophosphate kinase family.

The catalysed reaction is thiamine phosphate + ATP = thiamine diphosphate + ADP. Its pathway is cofactor biosynthesis; thiamine diphosphate biosynthesis; thiamine diphosphate from thiamine phosphate: step 1/1. Functionally, catalyzes the ATP-dependent phosphorylation of thiamine-monophosphate (TMP) to form thiamine-pyrophosphate (TPP), the active form of vitamin B1. This is Thiamine-monophosphate kinase from Corynebacterium glutamicum (strain ATCC 13032 / DSM 20300 / JCM 1318 / BCRC 11384 / CCUG 27702 / LMG 3730 / NBRC 12168 / NCIMB 10025 / NRRL B-2784 / 534).